Reading from the N-terminus, the 150-residue chain is Protein Turandot X (150 aa).

A signal peptide spans 1 to 22; it reads MGLHIGSLLICVFLGILPFATA. A disordered region spans residues 127–150; sequence REEGQSNHANSPTTLPSRIQKMTK. A compositionally biased stretch (polar residues) spans 132–150; sequence SNHANSPTTLPSRIQKMTK.

This sequence belongs to the Turandot family.

The protein localises to the secreted. Functionally, a humoral factor that may play a role in stress tolerance. The sequence is that of Protein Turandot X from Drosophila simulans (Fruit fly).